Here is a 353-residue protein sequence, read N- to C-terminus: Photosystem II protein D1 (353 aa).

Thr2 is modified (N-acetylthreonine). The residue at position 2 (Thr2) is a Phosphothreonine. Helical transmembrane passes span 29 to 46, 118 to 133, and 142 to 156; these read YIGW…TATS, HFLL…EWEL, and WIAV…AATA. His118 contributes to the chlorophyll a binding site. Tyr126 serves as a coordination point for pheophytin a. [CaMn4O5] cluster contacts are provided by Asp170 and Glu189. A helical membrane pass occupies residues 197–218; the sequence is FHMLGVAGVFGGSLFSAMHGSL. His198 contributes to the chlorophyll a binding site. A quinone-binding positions include His215 and 264 to 265; that span reads SF. His215 is a Fe cation binding site. His272 is a Fe cation binding site. Residues 274–288 form a helical membrane-spanning segment; it reads FLAAWPVVGIWFTAL. The [CaMn4O5] cluster site is built by His332, Glu333, Asp342, and Ala344. A propeptide spanning residues 345 to 353 is cleaved from the precursor; that stretch reads SVEAPSVNA.

This sequence belongs to the reaction center PufL/M/PsbA/D family. PSII is composed of 1 copy each of membrane proteins PsbA, PsbB, PsbC, PsbD, PsbE, PsbF, PsbH, PsbI, PsbJ, PsbK, PsbL, PsbM, PsbT, PsbX, PsbY, PsbZ, Psb30/Ycf12, at least 3 peripheral proteins of the oxygen-evolving complex and a large number of cofactors. It forms dimeric complexes. It depends on The D1/D2 heterodimer binds P680, chlorophylls that are the primary electron donor of PSII, and subsequent electron acceptors. It shares a non-heme iron and each subunit binds pheophytin, quinone, additional chlorophylls, carotenoids and lipids. D1 provides most of the ligands for the Mn4-Ca-O5 cluster of the oxygen-evolving complex (OEC). There is also a Cl(-1) ion associated with D1 and D2, which is required for oxygen evolution. The PSII complex binds additional chlorophylls, carotenoids and specific lipids. as a cofactor. Tyr-161 forms a radical intermediate that is referred to as redox-active TyrZ, YZ or Y-Z. In terms of processing, C-terminally processed by CTPA; processing is essential to allow assembly of the oxygen-evolving complex and thus photosynthetic growth.

It localises to the plastid. It is found in the chloroplast thylakoid membrane. The catalysed reaction is 2 a plastoquinone + 4 hnu + 2 H2O = 2 a plastoquinol + O2. Photosystem II (PSII) is a light-driven water:plastoquinone oxidoreductase that uses light energy to abstract electrons from H(2)O, generating O(2) and a proton gradient subsequently used for ATP formation. It consists of a core antenna complex that captures photons, and an electron transfer chain that converts photonic excitation into a charge separation. The D1/D2 (PsbA/PsbD) reaction center heterodimer binds P680, the primary electron donor of PSII as well as several subsequent electron acceptors. The sequence is that of Photosystem II protein D1 from Oltmannsiellopsis viridis (Marine flagellate).